Consider the following 198-residue polypeptide: Nucleoid occlusion factor SlmA (198 aa).

The HTH tetR-type domain occupies 9–70 (RNRREEILQA…SLIEFIEDSL (62 aa)). Residues 33–52 (TTAKLAANVGVSEAALYRHF) constitute a DNA-binding region (H-T-H motif). A coiled-coil region spans residues 119-144 (DRLQGRINQLFERIEVQLRQVLREKK).

This sequence belongs to the nucleoid occlusion factor SlmA family. In terms of assembly, homodimer. Interacts with FtsZ.

The protein resides in the cytoplasm. Its subcellular location is the nucleoid. Its function is as follows. Required for nucleoid occlusion (NO) phenomenon, which prevents Z-ring formation and cell division over the nucleoid. Acts as a DNA-associated cell division inhibitor that binds simultaneously chromosomal DNA and FtsZ, and disrupts the assembly of FtsZ polymers. SlmA-DNA-binding sequences (SBS) are dispersed on non-Ter regions of the chromosome, preventing FtsZ polymerization at these regions. This Yersinia enterocolitica serotype O:8 / biotype 1B (strain NCTC 13174 / 8081) protein is Nucleoid occlusion factor SlmA.